The following is an 839-amino-acid chain: Small conductance calcium-activated potassium channel protein 2 (839 aa).

Disordered stretches follow at residues 1 to 33 (MPIVLVRPTNRTRRLDSTGAGMGPSSHQQQESP), 64 to 115 (QRGF…QQPG), 195 to 258 (ALRQ…RRES), and 280 to 375 (SNLS…KKNQ). Composition is skewed to low complexity over residues 198 to 212 (QQYAQQPASASQYHQ) and 219 to 235 (ATSPTGSLGSLGSGPPL). Residues 236–253 (SHHHHHPHPAHHQHHQPQ) show a composition bias toward basic residues. The segment covering 313–326 (SSPSAAAAASSSAP) has biased composition (low complexity). Positions 345 to 363 (GTGGGGSTGGGGGGSGHGS) are enriched in gly residues. A helical transmembrane segment spans residues 398-418 (ALIFGMFGIVVMVIETELSWG). Y420 is subject to Phosphotyrosine. Residues 428-448 (LALKCLISLSTIILLGLIIVY) form a helical membrane-spanning segment. A helical transmembrane segment spans residues 474 to 494 (IFFICLEILVCAIHPIPGNYT). Residues 516 to 536 (IILSIPMFLRLYLIARVMLLH) form a helical membrane-spanning segment. Residues 565-585 (LMTICPGTVLLVFSISLWIIA) traverse the membrane as a helical segment. The segment at residues 605 to 625 (FLGAMWLISITFLSIGYGDMV) is an intramembrane region (pore-forming). The helical transmembrane segment at 634 to 654 (VCLLTGIMGAGCTALVVAVVA) threads the bilayer. The tract at residues 672–748 (DTQLTKRVKN…LVDLAKTQNI (77 aa)) is calmodulin-binding. A compositionally biased stretch (basic and acidic residues) spans 810–819 (HVSYNAERSR). A disordered region spans residues 810 to 839 (HVSYNAERSRSSSRRRRSSSTAPPTSSESS). Residues 828 to 839 (SSTAPPTSSESS) show a composition bias toward low complexity.

This sequence belongs to the potassium channel KCNN family. KCa2.2/KCNN2 subfamily. As to quaternary structure, homodimer. Heteromultimer with KCNN1 and KCNN3. The complex is composed of 4 channel subunits each of which binds to a calmodulin subunit which regulates the channel activity through calcium-binding. Interacts (via N-terminal domain) with MPP2. In terms of tissue distribution, expressed in atrial and ventricular myocytes with higher levels in atrial myocytes (at protein level). Highly expressed in brain, liver and colon with low levels in kidney and testis. In colon, detected in smooth muscle cells.

The protein resides in the membrane. It localises to the cytoplasm. Its subcellular location is the myofibril. The protein localises to the sarcomere. It is found in the z line. It catalyses the reaction K(+)(in) = K(+)(out). Its activity is regulated as follows. Inhibited by bee venom neurotoxin apamin. Inhibited by UCL 1684 and tetraethylammonium (TEA). Small conductance calcium-activated potassium channel that mediates the voltage-independent transmembrane transfer of potassium across the cell membrane through a constitutive interaction with calmodulin which binds the intracellular calcium allowing its opening. The current is characterized by a voltage-independent activation, an intracellular calcium concentration increase-dependent activation and a single-channel conductance of about 3 picosiemens. Also presents an inwardly rectifying current, thus reducing its already small outward conductance of potassium ions, which is particularly the case when the membrane potential displays positive values, above + 20 mV. The inward rectification could be due to a blockade of the outward current by intracellular divalent cations such as calcium and magnesium and could also be due to an intrinsic property of the channel pore, independent of intracellular divalent ions. There are three positively charged amino acids in the S6 transmembrane domain, close to the pore, that collectively control the conductance and rectification through an electrostatic mechanism. Additionally, electrostatic contributions from these residues also play an important role in determining the intrinsic open probability of the channel in the absence of calcium, affecting the apparent calcium affinity for activation. Forms an heteromeric complex with calmodulin, which is constitutively associated in a calcium-independent manner. Channel opening is triggered when calcium binds the calmodulin resulting in a rotary movement leading to the formation of the dimeric complex to open the gate. Plays a role in the repolarization phase of cardiac action potential. In Mus musculus (Mouse), this protein is Small conductance calcium-activated potassium channel protein 2.